Here is a 1025-residue protein sequence, read N- to C-terminus: MDRKKTLINSSVSNNNSTIKGLQLFIADLRSAQQAQEQEKRIQSEIVKIKQHFDAAKKKQGNHDRLGGYQRKKYVAKLAYIYITSNTTKLNEILFGLEQTVELLKSSIFSEKFIGYMTLELLYERSEVVAKVNDEVNYQLMKDLSSSDDNFVMLALNFVGVVGELTNRLAYNDDITTGVFKILRSPTSSIYLKKKSALSFLALLKSNHSILTEDLQRKQLWIQRILSLLDDTENYRLTLATIPLIEFIAKYIDPSYCTRLLPQLTEILYNCVVVGTSRSSDNQFPLEYTFANMPNPWLITKVVSLLSILIASPTERDSGSLLQTNNIDNELLNKLRKCVSVAIELGTRQAQDPMERIVQNTVLFSLINFASKLDPSDEAISNSVTALCSLLTSKEINIRYLTLDSLVKLCSSSGKPAIDAVRYKNLDMIFHLLNTERDSSIVRKVVDLLYTFTDVENVKIIVDGLLQYILSPKNLAEPQIKSDIAVKIAILTEKYATDINWFVIISLQLLSLTSNTTINDDEIWQRLCQIVVNNPSLHRITCERLVDYLCKKQASEAIIKAAAFLLGEYSSLITDRISSANLFTLFAEKYFSAPNVAKAMILTTMIKLYKTSPEIGSNVIKFFQLELNSLDIELQTRSFEYLNIIQLAKVNGNTDILQILFEPMPPFNSKSNPLLKRLGSLPASAGSTTLINTPSEASSSTPDLLSKRANSSRSIMVPMPPPSRRNTIDDVNSKISSSEDFSGKDSYYSRQILAPNWREGFTRMISHKQGVLFTSSLMKVFYRITTPDAQQPYVFHISLAFINLTEWEITGLSTQIIPSKTQGNPEYLIMNINTPSTATIGPHKRAEQSYEVSIRKPFDVEDSPILAIHFKCGGSTNTINLKTAIGMTTTLISSDVNPSMHLNLAQFISRWKTLSDALGKEGEYQKSGIKLNKDFRKVETISLEDGLLLLTQTVKRLGFDIVDQTSVRSTLFVSGIIHTKSEGNFGCLMKIQYQVNGTVNVTCKTTTAGPLAKYIVECIKNVLTK.

The segment at arginine 713–serine 737 is disordered. The residue at position 727 (threonine 727) is a Phosphothreonine. Serine 733 is modified (phosphoserine).

This sequence belongs to the adaptor complexes large subunit family. As to quaternary structure, adaptor protein complex 2 (AP-2) is a heterotetramer composed of two large adaptins (alpha-type subunit APL3 and beta-type subunit APL1), a medium chain (mu-type subunit APM4) and a small adaptin (sigma-type subunit APS2).

It is found in the cell membrane. Its subcellular location is the membrane. It localises to the coated pit. In terms of biological role, adaptins are components of the adaptor complexes which link clathrin to receptors in coated vesicles. Clathrin-associated protein complexes are believed to interact with the cytoplasmic tails of membrane proteins, leading to their selection and concentration. Alpha adaptin is a subunit of the plasma membrane adaptor. Facilitates interaction between APL1 and APS2. The sequence is that of AP-2 complex subunit alpha (APL3) from Saccharomyces cerevisiae (strain ATCC 204508 / S288c) (Baker's yeast).